A 137-amino-acid polypeptide reads, in one-letter code: Crustacean calcium-binding protein 23 (137 aa).

EF-hand domains follow at residues 27-48 (RDSSWTLSKEELSRGVSQFGLD), 62-97 (EKKAAVEAAFKHLDKTGDGVVTVEDIKGVYSAKVVK), and 100-135 (ATEEEILKKFLNMFESSTSVDGKVTKKEFLDYYSGL).

As to quaternary structure, monomer or disulfide-linked dimers.

Functionally, possibly acts as a regulatory protein and not as a calcium buffer or transport protein. The chain is Crustacean calcium-binding protein 23 from Homarus americanus (American lobster).